The chain runs to 181 residues: ATP synthase subunit b (181 aa).

A helical membrane pass occupies residues 23 to 43; sequence FIHIPTFIYTALNLVILYFIL.

This sequence belongs to the ATPase B chain family. As to quaternary structure, F-type ATPases have 2 components, F(1) - the catalytic core - and F(0) - the membrane proton channel. F(1) has five subunits: alpha(3), beta(3), gamma(1), delta(1), epsilon(1). F(0) has three main subunits: a(1), b(2) and c(10-14). The alpha and beta chains form an alternating ring which encloses part of the gamma chain. F(1) is attached to F(0) by a central stalk formed by the gamma and epsilon chains, while a peripheral stalk is formed by the delta and b chains.

It is found in the cell membrane. F(1)F(0) ATP synthase produces ATP from ADP in the presence of a proton or sodium gradient. F-type ATPases consist of two structural domains, F(1) containing the extramembraneous catalytic core and F(0) containing the membrane proton channel, linked together by a central stalk and a peripheral stalk. During catalysis, ATP synthesis in the catalytic domain of F(1) is coupled via a rotary mechanism of the central stalk subunits to proton translocation. Its function is as follows. Component of the F(0) channel, it forms part of the peripheral stalk, linking F(1) to F(0). The protein is ATP synthase subunit b of Acetivibrio thermocellus (strain ATCC 27405 / DSM 1237 / JCM 9322 / NBRC 103400 / NCIMB 10682 / NRRL B-4536 / VPI 7372) (Clostridium thermocellum).